The chain runs to 344 residues: NADH-ubiquinone oxidoreductase chain 2 (344 aa).

The next 11 membrane-spanning stretches (helical) occupy residues Met-1 to Leu-21, Phe-24 to Met-44, Tyr-59 to Trp-79, Met-94 to Ile-114, Ile-121 to Leu-141, Leu-150 to Gly-170, Ile-177 to Pro-197, Leu-201 to Ile-221, Leu-245 to Ile-265, Asn-273 to Ile-293, and Thr-324 to Leu-344.

It belongs to the complex I subunit 2 family.

Its subcellular location is the mitochondrion inner membrane. The enzyme catalyses a ubiquinone + NADH + 5 H(+)(in) = a ubiquinol + NAD(+) + 4 H(+)(out). Core subunit of the mitochondrial membrane respiratory chain NADH dehydrogenase (Complex I) that is believed to belong to the minimal assembly required for catalysis. Complex I functions in the transfer of electrons from NADH to the respiratory chain. The immediate electron acceptor for the enzyme is believed to be ubiquinone. The chain is NADH-ubiquinone oxidoreductase chain 2 (MT-ND2) from Aquarana catesbeiana (American bullfrog).